Consider the following 500-residue polypeptide: Cytochrome P450 2C11 (500 aa).

Cys-435 is a binding site for heme.

It belongs to the cytochrome P450 family. Requires heme as cofactor. Liver and kidney; male-specific.

The protein resides in the endoplasmic reticulum membrane. Its subcellular location is the microsome membrane. It carries out the reaction an organic molecule + reduced [NADPH--hemoprotein reductase] + O2 = an alcohol + oxidized [NADPH--hemoprotein reductase] + H2O + H(+). The catalysed reaction is testosterone + reduced [NADPH--hemoprotein reductase] + O2 = 2alpha,17beta-dihydroxyandrost-4-en-3-one + oxidized [NADPH--hemoprotein reductase] + H2O + H(+). The enzyme catalyses testosterone + reduced [NADPH--hemoprotein reductase] + O2 = 16alpha,17beta-dihydroxyandrost-4-en-3-one + oxidized [NADPH--hemoprotein reductase] + H2O + H(+). It catalyses the reaction (5Z,8Z,11Z,14Z)-eicosatetraenoate + reduced [NADPH--hemoprotein reductase] + O2 = (8R,9S)-epoxy-(5Z,11Z,14Z)-eicosatrienoate + oxidized [NADPH--hemoprotein reductase] + H2O + H(+). It carries out the reaction (5Z,8Z,11Z,14Z)-eicosatetraenoate + reduced [NADPH--hemoprotein reductase] + O2 = (8S,9R)-epoxy-(5Z,11Z,14Z)-eicosatrienoate + oxidized [NADPH--hemoprotein reductase] + H2O + H(+). The catalysed reaction is (5Z,8Z,11Z,14Z)-eicosatetraenoate + reduced [NADPH--hemoprotein reductase] + O2 = (11R,12S)-epoxy-(5Z,8Z,14Z)-eicosatrienoate + oxidized [NADPH--hemoprotein reductase] + H2O + H(+). The enzyme catalyses (5Z,8Z,11Z,14Z)-eicosatetraenoate + reduced [NADPH--hemoprotein reductase] + O2 = (11S,12R)-epoxy-(5Z,8Z,14Z)-eicosatrienoate + oxidized [NADPH--hemoprotein reductase] + H2O + H(+). It catalyses the reaction (5Z,8Z,11Z,14Z)-eicosatetraenoate + reduced [NADPH--hemoprotein reductase] + O2 = (14R,15S)-epoxy-(5Z,8Z,11Z)-eicosatrienoate + oxidized [NADPH--hemoprotein reductase] + H2O + H(+). It carries out the reaction (5Z,8Z,11Z,14Z)-eicosatetraenoate + reduced [NADPH--hemoprotein reductase] + O2 = (14S,15R)-epoxy-(5Z,8Z,11Z)-eicosatrienoate + oxidized [NADPH--hemoprotein reductase] + H2O + H(+). The catalysed reaction is (5Z,8Z,11Z,14Z,17Z)-eicosapentaenoate + reduced [NADPH--hemoprotein reductase] + O2 = 8,9-epoxy-(5Z,11Z,14Z,17Z)-eicosatetraenoate + oxidized [NADPH--hemoprotein reductase] + H2O + H(+). The enzyme catalyses (5Z,8Z,11Z,14Z,17Z)-eicosapentaenoate + reduced [NADPH--hemoprotein reductase] + O2 = 11,12-epoxy-(5Z,8Z,14Z,17Z)-eicosatetraenoate + oxidized [NADPH--hemoprotein reductase] + H2O + H(+). It catalyses the reaction (5Z,8Z,11Z,14Z,17Z)-eicosapentaenoate + reduced [NADPH--hemoprotein reductase] + O2 = 14,15-epoxy-(5Z,8Z,11Z,17Z)-eicosatetraenoate + oxidized [NADPH--hemoprotein reductase] + H2O + H(+). It carries out the reaction (5Z,8Z,11Z,14Z,17Z)-eicosapentaenoate + reduced [NADPH--hemoprotein reductase] + O2 = (17S,18R)-epoxy-(5Z,8Z,11Z,14Z)-eicosatetraenoate + oxidized [NADPH--hemoprotein reductase] + H2O + H(+). The catalysed reaction is (5Z,8Z,11Z,14Z,17Z)-eicosapentaenoate + reduced [NADPH--hemoprotein reductase] + O2 = (17R,18S)-epoxy-(5Z,8Z,11Z,14Z)-eicosatetraenoate + oxidized [NADPH--hemoprotein reductase] + H2O + H(+). The protein operates within lipid metabolism; arachidonate metabolism. It participates in steroid metabolism. A cytochrome P450 monooxygenase involved in the metabolism of steroid hormones and fatty acids. Catalyzes the hydroxylation of carbon-hydrogen bonds. Metabolizes testosterone to 2alpha- and 16alpha-hydroxytestosterone. Catalyzes the epoxidation of double bonds of polyunsaturated fatty acids (PUFAs). Converts arachidonic acid (ARA, C20:4(n-6)) primarily to epoxyeicosatrienoic acid (EET) regioisomers, 8,9-, 11,12-, and 14,15-EET, with both R,S and S,R stereochemistry. Preferentially produces 11R,12S-EET enantiomer. To a lesser extent, catalyzes the hydroxylation of arachidonic acid producing hydroxyeicosatetraenoates (HETEs). Metabolizes eicosapentaenoic acid (EPA, C20:5(n-3)) to epoxyeicosatetraenoic acid (EETeTr) regioisomers, 8,9-, 11,12-, 14,15-, and 17,18-EETeTr, preferentially producing 17R,18S-EETeTr enantiomer. Mechanistically, uses molecular oxygen inserting one oxygen atom into a substrate, and reducing the second into a water molecule, with two electrons provided by NADPH via cytochrome P450 reductase (NADPH--hemoprotein reductase). The chain is Cytochrome P450 2C11 (Cyp2c11) from Rattus norvegicus (Rat).